The sequence spans 240 residues: CRISPR system aCascade subunit Cas5 1 (240 aa).

The protein belongs to the CRISPR-associated protein Cas5 family. Subtype I-A/Apern subfamily. In terms of assembly, part of the aCascade ribonucleoprotein complex, minimally composed of Csa2 and Cas5a, which binds crRNA. Other possible components of aCascade in strain P1 are Cas6b (SSO1437) and Csa5 (SSO1443), while SSO1399, Cas5b (SSO1400) and SSO1401 have sometimes been seen weakly associated. Csa2 is probably the major RNA-binding subunit. The Csa2-Cas5a-crRNA complex also binds target DNA homologous to crRNA, probably forming an R-loop. Purified aCascade forms a filament about 6 nm in width.

CRISPR (clustered regularly interspaced short palindromic repeat) is an adaptive immune system that provides protection against mobile genetic elements (viruses, transposable elements and conjugative plasmids). CRISPR clusters contain spacers, sequences complementary to antecedent mobile elements, and target invading nucleic acids. CRISPR clusters are transcribed and processed into CRISPR RNA (crRNA). The protein is CRISPR system aCascade subunit Cas5 1 (cas5a) of Saccharolobus solfataricus (strain ATCC 35092 / DSM 1617 / JCM 11322 / P2) (Sulfolobus solfataricus).